Reading from the N-terminus, the 632-residue chain is Myrcene synthase TPS3FN, chloroplastic (632 aa).

Residues 1 to 55 (MHCMAVHQFSPSIVSSLPTISTYNNNHFCRFFTPKTSISPISKTKSKSSTCYPIQ) constitute a chloroplast transit peptide. Positions 343, 380, 384, 524, and 527 each coordinate (2E)-geranyl diphosphate. 2 residues coordinate Mg(2+): aspartate 380 and aspartate 384. A DDXXD motif motif is present at residues 380–384 (DDIYD). Mg(2+) contacts are provided by aspartate 527, threonine 531, and glutamate 535.

The protein belongs to the terpene synthase family. Tpsb subfamily. Requires Mg(2+) as cofactor. The cofactor is Mn(2+). Expressed in glandular trichomes two to four weeks after flowering onset.

It is found in the plastid. The protein resides in the chloroplast. The catalysed reaction is (2E)-geranyl diphosphate = beta-myrcene + diphosphate. Its pathway is secondary metabolite biosynthesis; terpenoid biosynthesis. In terms of biological role, involved in monoterpene (C10) olefins biosynthesis, constituants of cannabinoids and terpenoids-rich resins. Catalyzes strictly the conversion of (2E)-geranyl diphosphate to beta-myrcene. The protein is Myrcene synthase TPS3FN, chloroplastic of Cannabis sativa (Hemp).